The following is a 453-amino-acid chain: Pup--protein ligase (453 aa).

E9 serves as a coordination point for Mg(2+). R53 lines the ATP pocket. Position 55 (Y55) interacts with Mg(2+). The Proton acceptor role is filled by D57. E63 contributes to the Mg(2+) binding site. The ATP site is built by T66 and W420.

The protein belongs to the Pup ligase/Pup deamidase family. Pup-conjugating enzyme subfamily.

It carries out the reaction ATP + [prokaryotic ubiquitin-like protein]-L-glutamate + [protein]-L-lysine = ADP + phosphate + N(6)-([prokaryotic ubiquitin-like protein]-gamma-L-glutamyl)-[protein]-L-lysine.. The protein operates within protein degradation; proteasomal Pup-dependent pathway. Its pathway is protein modification; protein pupylation. Catalyzes the covalent attachment of the prokaryotic ubiquitin-like protein modifier Pup to the proteasomal substrate proteins, thereby targeting them for proteasomal degradation. This tagging system is termed pupylation. The ligation reaction involves the side-chain carboxylate of the C-terminal glutamate of Pup and the side-chain amino group of a substrate lysine. This chain is Pup--protein ligase, found in Kribbella flavida (strain DSM 17836 / JCM 10339 / NBRC 14399).